A 100-amino-acid chain; its full sequence is Small ribosomal subunit protein uS14c (100 aa).

This sequence belongs to the universal ribosomal protein uS14 family. In terms of assembly, part of the 30S ribosomal subunit.

It localises to the plastid. The protein localises to the chloroplast. Functionally, binds 16S rRNA, required for the assembly of 30S particles. This is Small ribosomal subunit protein uS14c from Mesostigma viride (Green alga).